The following is a 268-amino-acid chain: Interleukin-1 beta (268 aa).

Residues 1 to 116 (MATVPELNCE…WDDDDLLVCD (116 aa)) constitute a propeptide that is removed on maturation.

This sequence belongs to the IL-1 family. As to quaternary structure, monomer. In its precursor form, weakly interacts with full-length MEFV; the mature cytokine does not interact at all. Interacts with integrins ITGAV:ITGBV and ITGA5:ITGB1; integrin-binding is required for IL1B signaling. Interacts with cargo receptor TMED10; the interaction is direct and is required for the secretion of IL1B mature form. Interacts with HSP90AB1; the interaction facilitates cargo translocation into the ERGIC. Interacts with HSP90B1; the interaction facilitates cargo translocation into the ERGIC.

It localises to the cytoplasm. The protein localises to the cytosol. Its subcellular location is the secreted. The protein resides in the lysosome. It is found in the extracellular exosome. Its function is as follows. Potent pro-inflammatory cytokine. Initially discovered as the major endogenous pyrogen, induces prostaglandin synthesis, neutrophil influx and activation, T-cell activation and cytokine production, B-cell activation and antibody production, and fibroblast proliferation and collagen production. Promotes Th17 differentiation of T-cells. Synergizes with IL12/interleukin-12 to induce IFNG synthesis from T-helper 1 (Th1) cells. Plays a role in angiogenesis by inducing VEGF production synergistically with TNF and IL6. Involved in transduction of inflammation downstream of pyroptosis: its mature form is specifically released in the extracellular milieu by passing through the gasdermin-D (GSDMD) pore. This chain is Interleukin-1 beta, found in Rattus norvegicus (Rat).